A 338-amino-acid polypeptide reads, in one-letter code: Glyceraldehyde-3-phosphate dehydrogenase (338 aa).

NAD(+) is bound by residues 12–13, D38, and S125; that span reads RI. D-glyceraldehyde 3-phosphate-binding positions include 155–157, T186, 216–217, and R239; these read SCT and TG. C156 acts as the Nucleophile in catalysis. Residue N320 participates in NAD(+) binding.

Belongs to the glyceraldehyde-3-phosphate dehydrogenase family. Homotetramer.

Its subcellular location is the cytoplasm. It carries out the reaction D-glyceraldehyde 3-phosphate + phosphate + NAD(+) = (2R)-3-phospho-glyceroyl phosphate + NADH + H(+). It participates in carbohydrate degradation; glycolysis; pyruvate from D-glyceraldehyde 3-phosphate: step 1/5. Catalyzes the oxidative phosphorylation of glyceraldehyde 3-phosphate (G3P) to 1,3-bisphosphoglycerate (BPG) using the cofactor NAD. The first reaction step involves the formation of a hemiacetal intermediate between G3P and a cysteine residue, and this hemiacetal intermediate is then oxidized to a thioester, with concomitant reduction of NAD to NADH. The reduced NADH is then exchanged with the second NAD, and the thioester is attacked by a nucleophilic inorganic phosphate to produce BPG. In Lactobacillus delbrueckii subsp. bulgaricus, this protein is Glyceraldehyde-3-phosphate dehydrogenase (gap).